The sequence spans 917 residues: DNA repair endonuclease XPF (917 aa).

Residues 1-457 are helicase-like; that stretch reads MEPGLSGERR…EVWVNVRKGD (457 aa). Leucine-zipper regions lie at residues 233-254 and 270-298; these read LNACLKELKCHNPSLEVEDLSL and LDPLWHQLGAKTKSLVQDLKILRTLLQYL. At Lys-289 the chain carries N6-acetyllysine. The segment covering 454-479 has biased composition (basic and acidic residues); that stretch reads RKGDGPKRTTKSDKRPKAAPNKERAS. Disordered stretches follow at residues 454–524 and 643–681; these read RKGD…SSPE and VPEEREGRDETNLDLARGSAALDAPTDTRKAGGQEQNGT. Positions 487-492 match the Nuclear localization signal motif; the sequence is KRKKQE. Over residues 507–516 the composition is skewed to basic and acidic residues; that stretch reads EDKALEEDLC. Position 522 is a phosphoserine (Ser-522). The span at 643-653 shows a compositional bias: basic and acidic residues; that stretch reads VPEEREGRDET. The segment at 659–814 is nuclease; sequence RGSAALDAPT…PSPHATAELF (156 aa). Positions 684-764 constitute an ERCC4 domain; sequence SIVVDMREFR…RPVLLIEFDP (81 aa). Phosphoserine is present on Ser-765. A hhH2, dimerization with ERCC1 region spans residues 838–906; the sequence is TLPESDRYNP…QLHDFLHTAY (69 aa). Position 912 is an N6-acetyllysine (Lys-912).

This sequence belongs to the XPF family. In terms of assembly, heterodimer composed of ERCC1 and ERCC4/XPF. Interacts with SLX4/BTBD12; this interaction is direct and links the ERCC1-ERCC4/XPF complex to SLX4, which may coordinate the action of the structure-specific endonuclease during DNA repair. Requires Mg(2+) as cofactor. Acetylation at Lys-912 by KAT5 promotes interaction with ERCC1 by disrupting a salt bridge between Asp-908 and Lys-912, thereby exposing a second binding site for ERCC1. Deacetylated by SIRT1.

It is found in the nucleus. The protein resides in the chromosome. Its function is as follows. Catalytic component of a structure-specific DNA repair endonuclease responsible for the 5-prime incision during DNA repair, and which is essential for nucleotide excision repair (NER) and interstrand cross-link (ICL) repair. This Mus musculus (Mouse) protein is DNA repair endonuclease XPF.